The sequence spans 231 residues: Ion-translocating oxidoreductase complex subunit E (231 aa).

Helical transmembrane passes span 18–38 (ALVQ…ATNA), 39–59 (LGLG…ISTL), 63–83 (TPAE…VSAV), 86–106 (LINA…PLIV), 125–145 (ALSA…MFVL), and 182–202 (PFLL…MLAG).

Belongs to the NqrDE/RnfAE family. As to quaternary structure, the complex is composed of six subunits: RsxA, RsxB, RsxC, RsxD, RsxE and RsxG.

It is found in the cell inner membrane. Its function is as follows. Part of a membrane-bound complex that couples electron transfer with translocation of ions across the membrane. Required to maintain the reduced state of SoxR. This chain is Ion-translocating oxidoreductase complex subunit E, found in Shigella flexneri serotype 5b (strain 8401).